Here is a 527-residue protein sequence, read N- to C-terminus: Laccase-5 (527 aa).

A signal peptide spans 1–23 (MGKFHSFVNVVALSLSLSGRVFG). Positions 25–150 (IGPVTDLTIS…DGLRGPLVVY (126 aa)) constitute a Plastocyanin-like 1 domain. 2 N-linked (GlcNAc...) asparagine glycosylation sites follow: Asn74 and Asn77. Residues His87, His89, His132, and His134 each coordinate Cu cation. Disulfide bonds link Cys108–Cys516 and Cys140–Cys230. Asn156, Asn209, Asn233, Asn242, Asn276, Asn317, Asn358, Asn366, Asn393, and Asn402 each carry an N-linked (GlcNAc...) asparagine glycan. The Plastocyanin-like 2 domain occupies 162–306 (VDDDTTVITL…GGVNSAILRY (145 aa)). Positions 373–498 (TVPVLLQILS…AGFAIVFAED (126 aa)) constitute a Plastocyanin-like 3 domain. Cu cation-binding residues include His425, His428, His430, His480, Cys481, His482, and His486.

It belongs to the multicopper oxidase family. Requires Cu cation as cofactor.

Its subcellular location is the secreted. It carries out the reaction 4 hydroquinone + O2 = 4 benzosemiquinone + 2 H2O. Lignin degradation and detoxification of lignin-derived products. This Trametes versicolor (White-rot fungus) protein is Laccase-5 (LCC5).